Consider the following 341-residue polypeptide: Phosphate acyltransferase (341 aa).

This sequence belongs to the PlsX family. In terms of assembly, homodimer. Probably interacts with PlsY.

It is found in the cytoplasm. The enzyme catalyses a fatty acyl-[ACP] + phosphate = an acyl phosphate + holo-[ACP]. Its pathway is lipid metabolism; phospholipid metabolism. Its function is as follows. Catalyzes the reversible formation of acyl-phosphate (acyl-PO(4)) from acyl-[acyl-carrier-protein] (acyl-ACP). This enzyme utilizes acyl-ACP as fatty acyl donor, but not acyl-CoA. The polypeptide is Phosphate acyltransferase (Vibrio parahaemolyticus serotype O3:K6 (strain RIMD 2210633)).